Consider the following 125-residue polypeptide: Cu-Zn superoxide dismutase-like protein (125 aa).

Cysteine 52 and cysteine 102 are joined by a disulfide.

It belongs to the Cu-Zn superoxide dismutase family.

The protein localises to the host cytoplasm. Virion protein with no enzymatic activity. The protein is Cu-Zn superoxide dismutase-like protein of Mus musculus (Mouse).